The primary structure comprises 233 residues: Large ribosomal subunit protein uL22m (233 aa).

This sequence belongs to the universal ribosomal protein uL22 family. In terms of assembly, component of the mitochondrial ribosome large subunit (39S) which comprises a 16S rRNA and about 50 distinct proteins.

The protein resides in the mitochondrion. The chain is Large ribosomal subunit protein uL22m (mRpL22) from Drosophila melanogaster (Fruit fly).